Reading from the N-terminus, the 379-residue chain is GDSL esterase/lipase EXL2 (379 aa).

An N-terminal signal peptide occupies residues 1 to 35; sequence MKRNSINIHHVTSFSSSPFWCVFFLVLLCKTSTNA. Asn42 carries an N-linked (GlcNAc...) asparagine glycan. The active-site Nucleophile is the Ser54. Catalysis depends on residues Asp358 and His361.

Belongs to the 'GDSL' lipolytic enzyme family.

It is found in the secreted. In Arabidopsis thaliana (Mouse-ear cress), this protein is GDSL esterase/lipase EXL2 (EXL2).